The primary structure comprises 133 residues: EPAKSEDLIKWRQSAYQVLHWNMDRLKANIDSPQYNKDDGIKAANTIAAIANSGMGSLFAAGTETGKGWHPTSVKPAFFTDGKKVGEVAVAFNKEANELAKVAATGDAAAVKAQFGKVGQTCKACHDDFRRKD.

Heme c-binding residues include R12, T72, C122, C125, and H126.

Post-translationally, binds 1 heme c group covalently per subunit.

In terms of biological role, cytochrome c' is the most widely occurring bacterial c-type cytochrome. Cytochromes c' are high-spin proteins and the heme has no sixth ligand. Their exact function is not known. The polypeptide is Cytochrome c' (Rhodocyclus tenuis (Rhodospirillum tenue)).